Reading from the N-terminus, the 379-residue chain is Cytochrome b (379 aa).

4 helical membrane passes run 33-53 (FGSL…FLAM), 77-98 (WFLR…YLHI), 113-133 (WNVG…GYVL), and 178-198 (FFTF…IHLL). Positions 83 and 97 each coordinate heme b. Residues histidine 182 and histidine 196 each contribute to the heme b site. Histidine 201 contacts a ubiquinone. The next 4 helical transmembrane spans lie at 226–246 (YKDL…TLFS), 288–308 (LGGV…PITH), 320–340 (LTQI…WIGG), and 347–367 (FIII…VFAP).

Belongs to the cytochrome b family. As to quaternary structure, the cytochrome bc1 complex contains 3 respiratory subunits (MT-CYB, CYC1 and UQCRFS1), 2 core proteins (UQCRC1 and UQCRC2) and probably 6 low-molecular weight proteins. Heme b is required as a cofactor.

The protein localises to the mitochondrion inner membrane. Its function is as follows. Component of the ubiquinol-cytochrome c reductase complex (complex III or cytochrome b-c1 complex) that is part of the mitochondrial respiratory chain. The b-c1 complex mediates electron transfer from ubiquinol to cytochrome c. Contributes to the generation of a proton gradient across the mitochondrial membrane that is then used for ATP synthesis. The chain is Cytochrome b (mt-cyb) from Amia calva (Bowfin).